A 170-amino-acid chain; its full sequence is Phosphopantetheine adenylyltransferase (170 aa).

Threonine 10 lines the substrate pocket. Residues 10-11 (TF) and histidine 18 contribute to the ATP site. Residues lysine 42, valine 79, and arginine 93 each coordinate substrate. ATP contacts are provided by residues 94 to 96 (GLR), glutamate 104, and 129 to 135 (TQFISST).

It belongs to the bacterial CoaD family. Homohexamer. Requires Mg(2+) as cofactor.

It localises to the cytoplasm. The catalysed reaction is (R)-4'-phosphopantetheine + ATP + H(+) = 3'-dephospho-CoA + diphosphate. It participates in cofactor biosynthesis; coenzyme A biosynthesis; CoA from (R)-pantothenate: step 4/5. Functionally, reversibly transfers an adenylyl group from ATP to 4'-phosphopantetheine, yielding dephospho-CoA (dPCoA) and pyrophosphate. The chain is Phosphopantetheine adenylyltransferase from Parvibaculum lavamentivorans (strain DS-1 / DSM 13023 / NCIMB 13966).